Reading from the N-terminus, the 233-residue chain is Purine nucleoside phosphorylase DeoD-type (233 aa).

Residue histidine 4 participates in a purine D-ribonucleoside binding. Residues glycine 20, arginine 24, arginine 43, and 87–90 (RIGT) each bind phosphate. A purine D-ribonucleoside-binding positions include 179–181 (EME) and 203–204 (SD). The Proton donor role is filled by aspartate 204.

The protein belongs to the PNP/UDP phosphorylase family. As to quaternary structure, homohexamer; trimer of homodimers.

The catalysed reaction is a purine D-ribonucleoside + phosphate = a purine nucleobase + alpha-D-ribose 1-phosphate. It catalyses the reaction a purine 2'-deoxy-D-ribonucleoside + phosphate = a purine nucleobase + 2-deoxy-alpha-D-ribose 1-phosphate. Catalyzes the reversible phosphorolytic breakdown of the N-glycosidic bond in the beta-(deoxy)ribonucleoside molecules, with the formation of the corresponding free purine bases and pentose-1-phosphate. This Helicobacter pylori (strain G27) protein is Purine nucleoside phosphorylase DeoD-type.